The chain runs to 291 residues: Glycine--tRNA ligase alpha subunit (291 aa).

This sequence belongs to the class-II aminoacyl-tRNA synthetase family. Tetramer of two alpha and two beta subunits.

It is found in the cytoplasm. It catalyses the reaction tRNA(Gly) + glycine + ATP = glycyl-tRNA(Gly) + AMP + diphosphate. In Rhizorhabdus wittichii (strain DSM 6014 / CCUG 31198 / JCM 15750 / NBRC 105917 / EY 4224 / RW1) (Sphingomonas wittichii), this protein is Glycine--tRNA ligase alpha subunit.